We begin with the raw amino-acid sequence, 89 residues long: Aminoacyl carrier protein 2 (89 aa).

The Carrier domain occupies 6–84; it reads INVQNRVLSV…AMERMILNQL (79 aa). S42 is modified (O-(pantetheine 4'-phosphoryl)serine).

4'-phosphopantetheine is transferred from CoA to a specific serine of the apo-form of this carrier protein.

Functionally, aminoacyl carrier protein. Can be charged with L-glycine via the formation of a thioester bond between the amino acid and the 4'-phosphopantetheinyl prosthetic group, catalyzed by the bll6282 ligase. The polypeptide is Aminoacyl carrier protein 2 (Bradyrhizobium diazoefficiens (strain JCM 10833 / BCRC 13528 / IAM 13628 / NBRC 14792 / USDA 110)).